The primary structure comprises 539 residues: Phosphoenolpyruvate carboxykinase (ATP) (539 aa).

Substrate is bound by residues Arg-64, Tyr-206, and Lys-212. ATP contacts are provided by residues Lys-212, His-231, and 247-255; that span reads GLSGTGKTT. Residues Lys-212 and His-231 each contribute to the Mn(2+) site. Position 268 (Asp-268) interacts with Mn(2+). ATP is bound by residues Glu-296, Arg-332, 448-449, and Thr-454; that span reads RI. Residue Arg-332 coordinates substrate.

Belongs to the phosphoenolpyruvate carboxykinase (ATP) family. As to quaternary structure, monomer. The cofactor is Mn(2+).

The protein resides in the cytoplasm. The enzyme catalyses oxaloacetate + ATP = phosphoenolpyruvate + ADP + CO2. The protein operates within carbohydrate biosynthesis; gluconeogenesis. Involved in the gluconeogenesis. Catalyzes the conversion of oxaloacetate (OAA) to phosphoenolpyruvate (PEP) through direct phosphoryl transfer between the nucleoside triphosphate and OAA. This is Phosphoenolpyruvate carboxykinase (ATP) from Sodalis glossinidius (strain morsitans).